A 93-amino-acid polypeptide reads, in one-letter code: UPF0337 protein Bd3330 (93 aa).

Belongs to the UPF0337 (CsbD) family.

The chain is UPF0337 protein Bd3330 from Bdellovibrio bacteriovorus (strain ATCC 15356 / DSM 50701 / NCIMB 9529 / HD100).